We begin with the raw amino-acid sequence, 213 residues long: Uridine kinase (213 aa).

Position 15–22 (15–22) interacts with ATP; the sequence is GASASGKS.

It belongs to the uridine kinase family.

The protein localises to the cytoplasm. It carries out the reaction uridine + ATP = UMP + ADP + H(+). The catalysed reaction is cytidine + ATP = CMP + ADP + H(+). Its pathway is pyrimidine metabolism; CTP biosynthesis via salvage pathway; CTP from cytidine: step 1/3. It participates in pyrimidine metabolism; UMP biosynthesis via salvage pathway; UMP from uridine: step 1/1. This chain is Uridine kinase, found in Salmonella paratyphi A (strain ATCC 9150 / SARB42).